Here is a 331-residue protein sequence, read N- to C-terminus: MKQTVYTASPESQQIHVWSLNHEGTLTLVQVVDVPGQVQPMVVSPDKRYLYVGVRPEFRVLAYRIAPDDGVLTFAAESALPGSPTHISTDHHGRFVFVGSYNAGNVSVTRLQDGLPVELVDVVEGLDGCHSANITPDNRTLWVPALKQDRICLFTLSDDGHLVAQEPAEVNTVEGAGPRHMVFHPNRQYAYCVNELNSSVDVWQLKNPHGEIECVQTLDMMPADFSDTRWAADIHITPDGRHLYACDRTASLITVFSVSEDGSVLSVEGFQPTEVQPRGFNIDNSGKYLIAAGQKSHHIAVYEITGTQGLLTEKGRYAVGQGPMWVVVNAY.

This sequence belongs to the cycloisomerase 2 family.

It catalyses the reaction 6-phospho-D-glucono-1,5-lactone + H2O = 6-phospho-D-gluconate + H(+). It participates in carbohydrate degradation; pentose phosphate pathway; D-ribulose 5-phosphate from D-glucose 6-phosphate (oxidative stage): step 2/3. Catalyzes the hydrolysis of 6-phosphogluconolactone to 6-phosphogluconate. The chain is 6-phosphogluconolactonase from Salmonella choleraesuis (strain SC-B67).